A 326-amino-acid chain; its full sequence is uncharacterized protein (326 aa).

The S4 RNA-binding domain maps to 15–76 (VRIEKFCLKL…IEPYLHNHSE (62 aa)). D147 is an active-site residue.

This sequence belongs to the pseudouridine synthase RluA family.

It carries out the reaction a uridine in RNA = a pseudouridine in RNA. This is an uncharacterized protein from Mycoplasma pneumoniae (strain ATCC 29342 / M129 / Subtype 1) (Mycoplasmoides pneumoniae).